Here is an 833-residue protein sequence, read N- to C-terminus: DNA gyrase subunit A (833 aa).

In terms of domain architecture, Topo IIA-type catalytic spans 35–498 (LPDVRDGMKP…SEDMFEDEDL (464 aa)). The O-(5'-phospho-DNA)-tyrosine intermediate role is filled by Tyr123. The short motif at 525-531 (QKRGGRG) is the GyrA-box element. Positions 803–833 (RVDIEDDELDEDESIEEERDDRSEVEQGENE) are disordered. Residues 806 to 821 (IEDDELDEDESIEEER) show a composition bias toward acidic residues.

Belongs to the type II topoisomerase GyrA/ParC subunit family. Heterotetramer, composed of two GyrA and two GyrB chains. In the heterotetramer, GyrA contains the active site tyrosine that forms a transient covalent intermediate with DNA, while GyrB binds cofactors and catalyzes ATP hydrolysis.

It is found in the cytoplasm. The catalysed reaction is ATP-dependent breakage, passage and rejoining of double-stranded DNA.. In terms of biological role, a type II topoisomerase that negatively supercoils closed circular double-stranded (ds) DNA in an ATP-dependent manner to modulate DNA topology and maintain chromosomes in an underwound state. Negative supercoiling favors strand separation, and DNA replication, transcription, recombination and repair, all of which involve strand separation. Also able to catalyze the interconversion of other topological isomers of dsDNA rings, including catenanes and knotted rings. Type II topoisomerases break and join 2 DNA strands simultaneously in an ATP-dependent manner. This is DNA gyrase subunit A from Halalkalibacterium halodurans (strain ATCC BAA-125 / DSM 18197 / FERM 7344 / JCM 9153 / C-125) (Bacillus halodurans).